The sequence spans 314 residues: Oxalate oxidoreductase subunit beta (314 aa).

Cysteine 24, cysteine 27, cysteine 52, and cysteine 225 together coordinate [4Fe-4S] cluster.

As to quaternary structure, dimer of heterotrimer of one alpha, one beta and one delta subunit. [4Fe-4S] cluster serves as cofactor.

It catalyses the reaction oxidized 2[4Fe-4S]-[ferredoxin] + oxalate = reduced 2[4Fe-4S]-[ferredoxin] + 2 CO2. Catalyzes the anaerobic oxidation of oxalate using a broad range of electron acceptors, including ferredoxin and the nickel-dependent carbon monoxide dehydrogenase. Does not require coenzyme A as cosubstrate. Enables anaerobic growth on oxalate which is used as energy source by the bacteria. This Moorella thermoacetica (strain ATCC 39073 / JCM 9320) protein is Oxalate oxidoreductase subunit beta.